The primary structure comprises 308 residues: Cytochrome b (308 aa).

Transmembrane regions (helical) follow at residues 1–21 (FGSL…LMAM), 45–66 (WLIR…YLHI), 81–101 (WNTG…GYVL), and 146–166 (FFAL…VHLT). Residues histidine 51 and histidine 65 each coordinate heme b. Heme b is bound by residues histidine 150 and histidine 164. Histidine 169 is an a ubiquinone binding site. Transmembrane regions (helical) follow at residues 194-214 (IKDI…AMFS), 256-276 (LGGV…PFLH), and 288-308 (LSQL…WVGS).

This sequence belongs to the cytochrome b family. In terms of assembly, the cytochrome bc1 complex contains 11 subunits: 3 respiratory subunits (MT-CYB, CYC1 and UQCRFS1), 2 core proteins (UQCRC1 and UQCRC2) and 6 low-molecular weight proteins (UQCRH/QCR6, UQCRB/QCR7, UQCRQ/QCR8, UQCR10/QCR9, UQCR11/QCR10 and a cleavage product of UQCRFS1). This cytochrome bc1 complex then forms a dimer. Heme b is required as a cofactor.

It is found in the mitochondrion inner membrane. Component of the ubiquinol-cytochrome c reductase complex (complex III or cytochrome b-c1 complex) that is part of the mitochondrial respiratory chain. The b-c1 complex mediates electron transfer from ubiquinol to cytochrome c. Contributes to the generation of a proton gradient across the mitochondrial membrane that is then used for ATP synthesis. The sequence is that of Cytochrome b (MT-CYB) from Scytalopus magellanicus (Magellanic tapaculo).